Reading from the N-terminus, the 321-residue chain is Lipoyl synthase (321 aa).

[4Fe-4S] cluster-binding residues include Cys68, Cys73, Cys79, Cys94, Cys98, Cys101, and Ser308. The region spanning 80–297 (FNHGTATFMI…KELAESIGFT (218 aa)) is the Radical SAM core domain.

Belongs to the radical SAM superfamily. Lipoyl synthase family. Requires [4Fe-4S] cluster as cofactor.

It localises to the cytoplasm. The enzyme catalyses [[Fe-S] cluster scaffold protein carrying a second [4Fe-4S](2+) cluster] + N(6)-octanoyl-L-lysyl-[protein] + 2 oxidized [2Fe-2S]-[ferredoxin] + 2 S-adenosyl-L-methionine + 4 H(+) = [[Fe-S] cluster scaffold protein] + N(6)-[(R)-dihydrolipoyl]-L-lysyl-[protein] + 4 Fe(3+) + 2 hydrogen sulfide + 2 5'-deoxyadenosine + 2 L-methionine + 2 reduced [2Fe-2S]-[ferredoxin]. It participates in protein modification; protein lipoylation via endogenous pathway; protein N(6)-(lipoyl)lysine from octanoyl-[acyl-carrier-protein]: step 2/2. Its function is as follows. Catalyzes the radical-mediated insertion of two sulfur atoms into the C-6 and C-8 positions of the octanoyl moiety bound to the lipoyl domains of lipoate-dependent enzymes, thereby converting the octanoylated domains into lipoylated derivatives. The protein is Lipoyl synthase of Shewanella pealeana (strain ATCC 700345 / ANG-SQ1).